An 841-amino-acid chain; its full sequence is MSSKGGSSRLGSKDLKKMTSRTERELRDSGRVRGEVERVEKRLRATAKVKEQPPTGDYKRRALASPGETAAPTFLVDSRGIPRKTSSTAPRKATLRPASSSPRLASSSRPTESTLPSSSSRALQGASSSSSSRPRRLHESASGRGGSGGSAGELRQEKKRLPELEAAEAAPASCVVELRDVTARKGRTSPATPPETAGSSVCGQGSHARTAEKLEEGTASHRDGSRRGSVDAETWATPGDGSSSHEFESSPQREERMQPQETGRRELSSEPRSGDLTKNGGDGGPRRHSCAWRKWREHMIQSFDITTHPFPPRGDGSPRRGKFLMIFLTSSVLFFVFLQELVLNVTTFNGRCMSPVLYPSHDAPESERTPRVISFGYGACEHNLGVSLFRREETKKDPRGRWTPGPLTERCASGRCASDDGWPSDLVQRGRAQRSPAAFDSPNPRVFSSLGALDTNKVRNYGEMFRVVWGMFLHGGWMHLLLNVSCQAQTLWILEPAWGFLRTLSLWIVGGVSGSLLSAVANPCTVTVGSSGAFYGLLGALVPFSIEYWDHIASPAWFLFCVSVLVMVAQFGNMVGVQGVDNNAHLGGLIGGLLFGFATIRSVHAFRWQGVAERMASSTLFWWMFPAEKRRSLREDNLQRVAREREERSSGRIPPPKFVWKFRGHEREWCVRFAAAVGLVTFWSVLWLYLLVPSYYESLSSPPGNFSFLGSTGCHCCRVQPFPGEEDKLPAFHPVRVNRGLFWCFVSEGVANLFCGRSSALNRGADVYGQTRQFEEALGDLPSARAGEAPLRIAKEEGESASVWQRLVKSAKKTYNAVLGNTTTPAAPSAAELAQQTRAGQ.

Positions 1–10 (MSSKGGSSRL) are enriched in low complexity. A disordered region spans residues 1–289 (MSSKGGSSRL…GGDGGPRRHS (289 aa)). Basic and acidic residues predominate over residues 11-51 (GSKDLKKMTSRTERELRDSGRVRGEVERVEKRLRATAKVKE). The segment covering 95-132 (LRPASSSPRLASSSRPTESTLPSSSSRALQGASSSSSS) has biased composition (low complexity). Basic and acidic residues-rich tracts occupy residues 154–163 (LRQEKKRLPE), 209–230 (RTAE…RGSV), and 243–275 (SSHE…RSGD). 6 helical membrane passes run 323–343 (FLMI…ELVL), 464–484 (MFRV…LLNV), 492–512 (WILE…VGGV), 526–546 (VTVG…PFSI), 571–590 (FGNM…GGLI), and 673–693 (FAAA…LLVP). The active-site Nucleophile is Ser531. The active site involves His585.

It belongs to the peptidase S54 family.

The protein resides in the membrane. The catalysed reaction is Cleaves type-1 transmembrane domains using a catalytic dyad composed of serine and histidine that are contributed by different transmembrane domains.. Serine protease involved in intramembrane proteolysis. Cleaves microneme adhesins, such as MIC2. This step is essential for efficient invasion of host cells. Catalyzes intramembrane proteolysis of AMA1. In Toxoplasma gondii, this protein is Rhomboid-like protease 5 (ROM5).